Reading from the N-terminus, the 502-residue chain is Lysine--tRNA ligase (502 aa).

Residues glutamate 398 and glutamate 405 each coordinate Mg(2+).

It belongs to the class-II aminoacyl-tRNA synthetase family. As to quaternary structure, homodimer. Requires Mg(2+) as cofactor.

It is found in the cytoplasm. The catalysed reaction is tRNA(Lys) + L-lysine + ATP = L-lysyl-tRNA(Lys) + AMP + diphosphate. The protein is Lysine--tRNA ligase of Thermotoga sp. (strain RQ2).